A 694-amino-acid polypeptide reads, in one-letter code: Zinc finger BED domain-containing protein 5 (694 aa).

The BED-type zinc finger occupies 109 to 165 (RKYDESYLSFGFTYFGNRDAPHAQCVLCKKILSNSSLAPSKLRRHLETKHAAYKDKD). Cys-133, Cys-136, His-153, and His-158 together coordinate Zn(2+).

The chain is Zinc finger BED domain-containing protein 5 (ZBED5) from Bos taurus (Bovine).